Reading from the N-terminus, the 542-residue chain is CTP synthase (542 aa).

Residues 1 to 265 are amidoligase domain; it reads MARYVFITGG…DSEVLSAFGI (265 aa). Residue S13 coordinates CTP. UTP is bound at residue S13. 14–19 is a binding site for ATP; the sequence is SLGKGI. Y54 contacts L-glutamine. D71 lines the ATP pocket. Mg(2+)-binding residues include D71 and E139. Residues 146–148, 186–191, and K222 each bind CTP; these read DIE and KTKPTQ. Residues 186 to 191 and K222 each bind UTP; that span reads KTKPTQ. In terms of domain architecture, Glutamine amidotransferase type-1 spans 291–541; the sequence is TIAVVGKYTG…IEAAIEQSRL (251 aa). G353 contributes to the L-glutamine binding site. The active-site Nucleophile; for glutamine hydrolysis is C380. Residues 381 to 384, E404, and R469 each bind L-glutamine; that span reads FGMQ. Residues H514 and E516 contribute to the active site.

Belongs to the CTP synthase family. In terms of assembly, homotetramer.

It catalyses the reaction UTP + L-glutamine + ATP + H2O = CTP + L-glutamate + ADP + phosphate + 2 H(+). It carries out the reaction L-glutamine + H2O = L-glutamate + NH4(+). The enzyme catalyses UTP + NH4(+) + ATP = CTP + ADP + phosphate + 2 H(+). Its pathway is pyrimidine metabolism; CTP biosynthesis via de novo pathway; CTP from UDP: step 2/2. With respect to regulation, allosterically activated by GTP, when glutamine is the substrate; GTP has no effect on the reaction when ammonia is the substrate. The allosteric effector GTP functions by stabilizing the protein conformation that binds the tetrahedral intermediate(s) formed during glutamine hydrolysis. Inhibited by the product CTP, via allosteric rather than competitive inhibition. Its function is as follows. Catalyzes the ATP-dependent amination of UTP to CTP with either L-glutamine or ammonia as the source of nitrogen. Regulates intracellular CTP levels through interactions with the four ribonucleotide triphosphates. This Brucella abortus (strain 2308) protein is CTP synthase.